The sequence spans 390 residues: S-adenosylmethionine synthase 2 (390 aa).

Glu9 contributes to the Mg(2+) binding site. His15 contacts ATP. Glu43 lines the K(+) pocket. Residues Glu56 and Gln99 each contribute to the L-methionine site. Residues 167 to 169 (DGK), 235 to 238 (SGRF), Asp246, 252 to 253 (RK), Ala269, Lys273, and Lys277 contribute to the ATP site. Asp246 is a binding site for L-methionine. Lys277 contributes to the L-methionine binding site.

This sequence belongs to the AdoMet synthase family. Homotetramer. The cofactor is Mn(2+). Requires Mg(2+) as cofactor. It depends on Co(2+) as a cofactor. K(+) is required as a cofactor.

The protein resides in the cytoplasm. The catalysed reaction is L-methionine + ATP + H2O = S-adenosyl-L-methionine + phosphate + diphosphate. It functions in the pathway amino-acid biosynthesis; S-adenosyl-L-methionine biosynthesis; S-adenosyl-L-methionine from L-methionine: step 1/1. Functionally, catalyzes the formation of S-adenosylmethionine from methionine and ATP. The reaction comprises two steps that are both catalyzed by the same enzyme: formation of S-adenosylmethionine (AdoMet) and triphosphate, and subsequent hydrolysis of the triphosphate. The chain is S-adenosylmethionine synthase 2 (SAMS2) from Nicotiana tabacum (Common tobacco).